The primary structure comprises 187 residues: Ribosome-recycling factor (187 aa).

Residues 141–169 are disordered; it reads LKKGNKNGDFNDDEFHDLEKKVQNETDAG.

This sequence belongs to the RRF family.

The protein resides in the cytoplasm. Functionally, responsible for the release of ribosomes from messenger RNA at the termination of protein biosynthesis. May increase the efficiency of translation by recycling ribosomes from one round of translation to another. This chain is Ribosome-recycling factor, found in Limosilactobacillus reuteri (strain DSM 20016) (Lactobacillus reuteri).